The sequence spans 371 residues: Putative glutamate--cysteine ligase 2 (371 aa).

This sequence belongs to the glutamate--cysteine ligase type 2 family. YbdK subfamily.

The enzyme catalyses L-cysteine + L-glutamate + ATP = gamma-L-glutamyl-L-cysteine + ADP + phosphate + H(+). Its function is as follows. ATP-dependent carboxylate-amine ligase which exhibits weak glutamate--cysteine ligase activity. The sequence is that of Putative glutamate--cysteine ligase 2 from Cupriavidus taiwanensis (strain DSM 17343 / BCRC 17206 / CCUG 44338 / CIP 107171 / LMG 19424 / R1) (Ralstonia taiwanensis (strain LMG 19424)).